Consider the following 324-residue polypeptide: NADH-ubiquinone oxidoreductase chain 1 (324 aa).

The next 8 helical transmembrane spans lie at 10–30 (MIMTLSYIIPILIAVAFLTLV), 76–96 (FLFIMTPILALLLALTIWIPL), 107–127 (LGLLFLLAMSSLTVYSLLWSG), 143–163 (VAQTISYEVTLAIILLSTIML), 178–198 (PIYLIFSSWPLAMMWYISTLA), 229–249 (LFFLAEYANIMLMNTLTITLF), 260–280 (ELFSITLATKVLLLSSSFLWV), and 300–320 (FLPLTLALCLWHTSMPISYAG).

This sequence belongs to the complex I subunit 1 family.

Its subcellular location is the mitochondrion inner membrane. The catalysed reaction is a ubiquinone + NADH + 5 H(+)(in) = a ubiquinol + NAD(+) + 4 H(+)(out). Its function is as follows. Core subunit of the mitochondrial membrane respiratory chain NADH dehydrogenase (Complex I) that is believed to belong to the minimal assembly required for catalysis. Complex I functions in the transfer of electrons from NADH to the respiratory chain. The immediate electron acceptor for the enzyme is believed to be ubiquinone. The chain is NADH-ubiquinone oxidoreductase chain 1 (MT-ND1) from Excalfactoria chinensis (Blue-breasted quail).